A 203-amino-acid polypeptide reads, in one-letter code: MIVDFYFDFLSPFSYLANQRLSKLAQDYGLTIRYNAIDLARVKIAIGNVGPSNRDLKVKLDYLKVDLQRWAQLYGIPLVFPANYNSRRMNIGFYYSGAEAQAAAYVNVVFNAVWGEGIAPDLESLPALVSEKLGWDRSAFEHFLSSNAATERYDEQTHAAIERKVFGVPTMFLGDEMWWGNDRLFMLESAMGRLCRQNADLSS.

The active-site Nucleophile is serine 11. Serine 11 serves as a coordination point for glutathione. Substrate-binding positions include lysine 43, 53–54, and tyrosine 84; that span reads NR. Residues valine 168 and 179-182 contribute to the glutathione site; that span reads WGND.

This sequence belongs to the GST superfamily. NadH family. The cofactor is glutathione.

The enzyme catalyses 2-hydroxychromene-2-carboxylate = (3E)-4-(2-hydroxyphenyl)-2-oxobut-3-enoate. Its pathway is aromatic compound metabolism; naphthalene degradation. Its function is as follows. Involved in the naphthalene catabolic pathway. Catalyzes the reversible glutathione-dependent isomerization of 2-hydroxychromene-2-carboxylate (HCCA) to trans-O-hydroxybenzylidenepyruvate (THBPA). This chain is 2-hydroxychromene-2-carboxylate isomerase (nahD), found in Pseudomonas putida (Arthrobacter siderocapsulatus).